The following is a 172-amino-acid chain: MVINFEELHPQERAELERNIFFSTLEQLKGWARSNSLWPMTFGLACCAIEMMGVGSSHYDLDRFGSFFRTSPRQSDVMIVSGTVTKKMAPIVRRLYDQMPEPKWVIAMGSCATAGGPYVNSYAVVKGVDQIVPVDVYIPGCPPNPAALIYGINKLKEKIRYEARTGKQVTNK.

Positions 46, 47, 111, and 141 each coordinate [4Fe-4S] cluster.

The protein belongs to the complex I 20 kDa subunit family. NDH-1 is composed of 14 different subunits. Subunits NuoB, C, D, E, F, and G constitute the peripheral sector of the complex. [4Fe-4S] cluster is required as a cofactor.

The protein localises to the cell membrane. The catalysed reaction is a quinone + NADH + 5 H(+)(in) = a quinol + NAD(+) + 4 H(+)(out). Functionally, NDH-1 shuttles electrons from NADH, via FMN and iron-sulfur (Fe-S) centers, to quinones in the respiratory chain. The immediate electron acceptor for the enzyme in this species is believed to be a menaquinone. Couples the redox reaction to proton translocation (for every two electrons transferred, four hydrogen ions are translocated across the cytoplasmic membrane), and thus conserves the redox energy in a proton gradient. This Bacillus mycoides (strain KBAB4) (Bacillus weihenstephanensis) protein is NADH-quinone oxidoreductase subunit B.